We begin with the raw amino-acid sequence, 403 residues long: Eukaryotic initiation factor 4A (403 aa).

The interval 1-20 (MDDRNEIPQDGPASMEPEGV) is disordered. The Q motif motif lies at 30–58 (DNFDDMNLREELLRGIYGYGFEKPSAIQQ). Positions 61–231 (IIPCVRGRDV…RCFMRDPVSI (171 aa)) constitute a Helicase ATP-binding domain. 74-81 (AQSGTGKT) is a binding site for ATP. Residues 179–182 (DEAD) carry the DEAD box motif. Residues 242-403 (GIKQFYVNVK…EMPANIADLI (162 aa)) enclose the Helicase C-terminal domain.

This sequence belongs to the DEAD box helicase family. eIF4A subfamily. In terms of assembly, eIF4F is a multi-subunit complex, the composition of which varies with external and internal environmental conditions. It is composed of at least eIF4A, eIF4E1 and eIF4G1. Interacts with tud and vas. Interacts (via multiple contacts) with bam; the interaction is direct.

The protein localises to the cytoplasm. The protein resides in the cytoplasmic ribonucleoprotein granule. It catalyses the reaction ATP + H2O = ADP + phosphate + H(+). Its function is as follows. ATP-dependent RNA helicase which is a subunit of the eIF4F complex involved in cap recognition and is required for mRNA binding to ribosome. In the current model of translation initiation, eIF4A unwinds RNA secondary structures in the 5'-UTR of mRNAs which is necessary to allow efficient binding of the small ribosomal subunit, and subsequent scanning for the initiator codon. As a result, promotes cell proliferation and growth. Binds and antagonises the bam-bgcn complex; probably prevents bam mediated translational repression of shg/E-cadherin. Involved in germ cell formation. Involved in germline stem cell maintenance and proliferation; prevents differentiation. In Drosophila melanogaster (Fruit fly), this protein is Eukaryotic initiation factor 4A.